The chain runs to 1422 residues: FH1/FH2 domain-containing protein 3 (1422 aa).

One can recognise a GBD/FH3 domain in the interval 18-411 (NSTNFPEPSR…NFGNNSYHSS (394 aa)). Disordered regions lie at residues 323-464 (RHED…RRRQ), 521-666 (ACLA…GVNG), 687-708 (RKSP…QEAE), 754-781 (SGDL…VQPK), 821-849 (LGHR…PPLL), 1262-1305 (QQKQ…SYAE), 1320-1357 (SSPS…SPNV), and 1374-1410 (TQVP…EEAR). Serine 345 carries the post-translational modification Phosphoserine. The segment covering 357-366 (LDRRRSRRHS) has biased composition (basic residues). A compositionally biased stretch (polar residues) spans 367–390 (VQSIKSTLSAPTSPCSQSAPSFKP). Serine 375 carries the phosphoserine modification. A compositionally biased stretch (low complexity) spans 410–430 (SSRPSSGSSVPTTPTSSVSPP). Residues 438-449 (SSPSGLLTSSFR) show a composition bias toward polar residues. The stretch at 448–480 (FRQHQESLAAERERRRQEREERLQRIEREERNK) forms a coiled coil. Residues 450–464 (QHQESLAAERERRRQ) show a composition bias toward basic and acidic residues. The span at 521–535 (ACLAPLSHSPSSSDS) shows a compositional bias: low complexity. The span at 536-547 (QEALTVSASSPG) shows a compositional bias: polar residues. Acidic residues-rich tracts occupy residues 559-569 (PEPESEAEPEA) and 592-603 (ETEVEQALEQEP). Residues 604-624 (EERASLSEKERQNEGVNERDN) show a composition bias toward basic and acidic residues. Residues 626-635 (SASSVSSSSS) show a composition bias toward low complexity. Over residues 637–651 (LEREEKEDKLSRDRT) the composition is skewed to basic and acidic residues. Serine 763 carries the post-translational modification Phosphoserine. Threonine 775 is subject to Phosphothreonine. Positions 827–849 (PGPPPPPPPTFLGLPPPPPPPLL) are enriched in pro residues. The FH1 domain occupies 827 to 858 (PGPPPPPPPTFLGLPPPPPPPLLDSIPPPPVP). One can recognise an FH2 domain in the interval 883–1279 (GQPTFTKKKK…HRERNKTRGK (397 aa)). Residues 1264 to 1278 (KQKRANHRERNKTRG) show a composition bias toward basic residues. In terms of domain architecture, DAD spans 1359 to 1391 (DDAADEIMDRIVKSATQVPSQRVVPRERKRSRA). Positions 1385–1400 (ERKRSRANRKSLRRTL) are enriched in basic residues.

This sequence belongs to the formin homology family. As to quaternary structure, interacts with nestin/NES-based interfilament (IF). Interacts with SQSTM1; isoform 4 threonine phosphorylation disrupts SQSTM1-binding. In terms of processing, phosphorylated on Thr-1474 and Thr-1476 by CK2. As to expression, expressed in the heart, kidney and brain. May be down-regulated in various types of heart diseases, including idiopathic dilated, ventricular dilated, familial dilated and perinatal dilated cardiomyopathies, as well as ischemic heart disease (at protein level).

It is found in the cytoplasm. It localises to the cytoskeleton. The protein resides in the myofibril. Its subcellular location is the sarcomere. The protein localises to the z line. Functionally, actin-organizing protein that may cause stress fiber formation together with cell elongation. Isoform 4 may play a role in actin filament polymerization in cardiomyocytes. The sequence is that of FH1/FH2 domain-containing protein 3 (FHOD3) from Homo sapiens (Human).